The chain runs to 350 residues: Fe(2+) transport protein 2 (350 aa).

The first 21 residues, 1–21, serve as a signal peptide directing secretion; that stretch reads MATTKLVYILLILFTFTVSPA. Residues 22 to 47 lie on the Extracellular side of the membrane; sequence ISTAPEHCDSGFDNPCINKAKALPLK. Residues 48–68 form a helical membrane-spanning segment; it reads IVAIVAILTTSLIGVTSPLFS. Residues 69–80 are Cytoplasmic-facing; it reads RYISFLRPDGNG. The chain crosses the membrane as a helical span at residues 81 to 101; it reads FMIVKCFSSGIILGTGFMHVL. The Extracellular segment spans residues 102-120; it reads PDSFEMLSSKCLSDNPWHK. A helical membrane pass occupies residues 121–141; sequence FPFAGFVAMMSGLVTLAIDSI. Residues 142–195 are Cytoplasmic-facing; it reads TTSLYTGKNSVGPVPDEEYGIDQEKAIHMVGHNHSHGHGVVLATKDDGQLLRYQ. The chain crosses the membrane as a helical span at residues 196 to 216; that stretch reads VIAMVLEVGILFHSVVIGLSL. The Extracellular segment spans residues 217-227; it reads GATNDSCTIKG. The helical transmembrane segment at 228–248 threads the bilayer; sequence LIIALCFHHLFEGIGLGGCIL. At 249–257 the chain is on the cytoplasmic side; it reads QADFTNVKK. A helical membrane pass occupies residues 258–278; sequence FLMAFFFTGTTPCGIFLGIAL. Residues 279 to 289 lie on the Extracellular side of the membrane; that stretch reads SSIYRDNSPTA. Residues 290 to 310 form a helical membrane-spanning segment; it reads LITIGLLNACSAGMLIYMALV. Residues 311–329 are Cytoplasmic-facing; sequence DLLATEFMGSMLQGSIKLQ. The chain crosses the membrane as a helical span at residues 330–350; it reads IKCFTAALLGCAVMSVVAVWA.

The protein belongs to the ZIP transporter (TC 2.A.5) family. In terms of tissue distribution, expressed in the external cell layers of the root subapical zone.

The protein localises to the cell membrane. Its function is as follows. High-affinity iron transporter that mediates under iron-deficiency the iron uptake from the rhizosphere across the plasma membrane in the root epidermal layer. Could also be capable of transporting zinc ions. This chain is Fe(2+) transport protein 2 (IRT2), found in Arabidopsis thaliana (Mouse-ear cress).